The chain runs to 697 residues: CENP-A multicopy suppressor protein 2 (697 aa).

The segment at 351-378 (CQNCGTIKTANWRNATYMNITLMLCNAC) adopts a GATA-type; atypical zinc-finger fold. Residues 443 to 484 (PLNRLTSLDSTHSAPDPNHISKPSVVNQQKSRGGPRTAKLKN) form a disordered region. Residues 445-455 (NRLTSLDSTHS) show a composition bias toward polar residues.

As to quaternary structure, interacts with CENP-A.

It localises to the nucleus. It is found in the chromosome. Its subcellular location is the centromere. In terms of biological role, required for proper chromosome segregation via regulation of CENP-A localization to the centromere. The chain is CENP-A multicopy suppressor protein 2 (ams2) from Schizosaccharomyces pombe (strain 972 / ATCC 24843) (Fission yeast).